We begin with the raw amino-acid sequence, 151 residues long: Acidic phospholipase A2 5 (151 aa).

The first 27 residues, 1–27 (MYPAHLLVLLAVCVSLLGAASIPARPL), serve as a signal peptide directing secretion. 7 disulfides stabilise this stretch: cysteine 38-cysteine 104, cysteine 54-cysteine 151, cysteine 56-cysteine 72, cysteine 71-cysteine 132, cysteine 78-cysteine 125, cysteine 88-cysteine 118, and cysteine 111-cysteine 123. The Ca(2+) site is built by tyrosine 55, glycine 57, and glycine 59. The active site involves histidine 75. Residue aspartate 76 participates in Ca(2+) binding. Residue aspartate 126 is part of the active site.

This sequence belongs to the phospholipase A2 family. Group I subfamily. D49 sub-subfamily. The cofactor is Ca(2+). Expressed by the venom gland.

It is found in the secreted. The enzyme catalyses a 1,2-diacyl-sn-glycero-3-phosphocholine + H2O = a 1-acyl-sn-glycero-3-phosphocholine + a fatty acid + H(+). Its function is as follows. PLA2 catalyzes the calcium-dependent hydrolysis of the 2-acyl groups in 3-sn-phosphoglycerides. The protein is Acidic phospholipase A2 5 of Tropidechis carinatus (Australian rough-scaled snake).